Here is a 267-residue protein sequence, read N- to C-terminus: Protein PERCC1 (267 aa).

Disordered stretches follow at residues 19–88 (HHPF…QLLR), 142–163 (SLED…RPGL), and 247–267 (ACPE…PAEA). A compositionally biased stretch (acidic residues) spans 28-50 (EPPETSEEEEEEEEEEEEEEGEG). Positions 74 to 83 (PEGPGSPETP) are enriched in low complexity.

Functionally, plays a critical role in intestinal function. Acts by promoting the development of enteroendocrine cells (EECs) of the gastrointestinal tract and pancreas. It is thereby required for normal enteroendocrine peptide hormone secretion. This is Protein PERCC1 from Homo sapiens (Human).